The primary structure comprises 157 residues: Phospholipase A2 phaiodactylipin (157 aa).

Positions 34 and 36 each coordinate Ca(2+). Intrachain disulfides connect cysteine 35–cysteine 56, cysteine 55–cysteine 94, cysteine 62–cysteine 87, cysteine 85–cysteine 127, and cysteine 132–cysteine 143. A glycan (N-linked (GlcNAc...) asparagine) is linked at asparagine 43. The active site involves histidine 59. Aspartate 60 lines the Ca(2+) pocket. The active site involves aspartate 88. Asparagine 101 is a glycosylation site (N-linked (GlcNAc...) asparagine). Residues 134 to 139 constitute a propeptide, removed in mature form; that stretch reads DEKSAR. Asparagine 153 carries N-linked (GlcNAc...) asparagine glycosylation.

Belongs to the phospholipase A2 family. Group III subfamily. As to quaternary structure, heterodimer composed of a small subunit and a large subunit; disulfide-linked. The cofactor is Ca(2+). In terms of tissue distribution, expressed by the venom gland.

The protein resides in the secreted. It carries out the reaction a 1,2-diacyl-sn-glycero-3-phosphocholine + H2O = a 1-acyl-sn-glycero-3-phosphocholine + a fatty acid + H(+). In terms of biological role, scorpion venom phospholipase A2 (PLA2) that is lethal to crickets and crustaceae. Causes inflammation in mice and lysis of human erythrocytes. Has a mild anticoagulant effect on human platelets. PLA2 catalyzes the calcium-dependent hydrolysis of the 2-acyl groups in 3-sn-phosphoglycerides. The sequence is that of Phospholipase A2 phaiodactylipin from Anuroctonus phaiodactylus (Mafia scorpion).